The chain runs to 214 residues: Imidazole glycerol phosphate synthase subunit HisH (214 aa).

The Glutamine amidotransferase type-1 domain occupies 3–211 (TIAVIDYDMG…VSKVIPKNLA (209 aa)). Cys81 (nucleophile) is an active-site residue. Active-site residues include His186 and Glu188.

In terms of assembly, heterodimer of HisH and HisF.

Its subcellular location is the cytoplasm. The enzyme catalyses 5-[(5-phospho-1-deoxy-D-ribulos-1-ylimino)methylamino]-1-(5-phospho-beta-D-ribosyl)imidazole-4-carboxamide + L-glutamine = D-erythro-1-(imidazol-4-yl)glycerol 3-phosphate + 5-amino-1-(5-phospho-beta-D-ribosyl)imidazole-4-carboxamide + L-glutamate + H(+). It catalyses the reaction L-glutamine + H2O = L-glutamate + NH4(+). It functions in the pathway amino-acid biosynthesis; L-histidine biosynthesis; L-histidine from 5-phospho-alpha-D-ribose 1-diphosphate: step 5/9. Functionally, IGPS catalyzes the conversion of PRFAR and glutamine to IGP, AICAR and glutamate. The HisH subunit catalyzes the hydrolysis of glutamine to glutamate and ammonia as part of the synthesis of IGP and AICAR. The resulting ammonia molecule is channeled to the active site of HisF. This Trichodesmium erythraeum (strain IMS101) protein is Imidazole glycerol phosphate synthase subunit HisH.